We begin with the raw amino-acid sequence, 384 residues long: SAGA complex subunit Spt3 (384 aa).

Belongs to the SPT3 family. As to quaternary structure, component of the Spt-Ada-Gcn5 acetyltransferase (SAGA) complex consisting of wda/Taf5L, Saf6, Taf9, Taf10b, Taf12, Ada1, Spt3, Spt7, Spt20, Sf3b3, Sf3b5, Nipped-A/Tra1, a histone acetyltransferase (HAT) module made up of Gcn5, Ada2b (Isoform B), Ada3 and Sgf29, and a deubiquitinase (DUB) module made up of not/nonstop, Sgf11 and e(y)2 tethered to SAGA by Atxn7. Taf5 and Taf10, which has partially redundant properties with Taf10b, may also be part of this complex.

It is found in the nucleus. Its subcellular location is the chromosome. In terms of biological role, component of the transcription regulatory complex SAGA, a multiprotein complex that activates transcription by remodeling chromatin and mediating histone acetylation and deubiquitination. The SAGA complex predominantly acetylates histone H3. Required for oogenesis; involved in transcriptional activation. This Drosophila melanogaster (Fruit fly) protein is SAGA complex subunit Spt3.